The sequence spans 99 residues: Plastocyanin (99 aa).

One can recognise a Plastocyanin-like domain in the interval isoleucine 1–asparagine 99. Histidine 37, cysteine 84, histidine 87, and methionine 92 together coordinate Cu cation.

This sequence belongs to the plastocyanin family. Cu(2+) serves as cofactor.

The protein resides in the plastid. It localises to the chloroplast thylakoid membrane. In terms of biological role, participates in electron transfer between P700 and the cytochrome b6-f complex in photosystem I. The polypeptide is Plastocyanin (PETE) (Cucurbita pepo (Vegetable marrow)).